The primary structure comprises 231 residues: 5'-methylthioadenosine/S-adenosylhomocysteine nucleosidase (231 aa).

The Proton acceptor role is filled by E12. Substrate contacts are provided by residues G78, V153, and 174-175; that span reads ME. D198 functions as the Proton donor in the catalytic mechanism.

Belongs to the PNP/UDP phosphorylase family. MtnN subfamily.

It catalyses the reaction S-adenosyl-L-homocysteine + H2O = S-(5-deoxy-D-ribos-5-yl)-L-homocysteine + adenine. The catalysed reaction is S-methyl-5'-thioadenosine + H2O = 5-(methylsulfanyl)-D-ribose + adenine. The enzyme catalyses 5'-deoxyadenosine + H2O = 5-deoxy-D-ribose + adenine. The protein operates within amino-acid biosynthesis; L-methionine biosynthesis via salvage pathway; S-methyl-5-thio-alpha-D-ribose 1-phosphate from S-methyl-5'-thioadenosine (hydrolase route): step 1/2. Functionally, catalyzes the irreversible cleavage of the glycosidic bond in both 5'-methylthioadenosine (MTA) and S-adenosylhomocysteine (SAH/AdoHcy) to adenine and the corresponding thioribose, 5'-methylthioribose and S-ribosylhomocysteine, respectively. Also cleaves 5'-deoxyadenosine, a toxic by-product of radical S-adenosylmethionine (SAM) enzymes, into 5-deoxyribose and adenine. The sequence is that of 5'-methylthioadenosine/S-adenosylhomocysteine nucleosidase from Vibrio parahaemolyticus serotype O3:K6 (strain RIMD 2210633).